A 363-amino-acid polypeptide reads, in one-letter code: MHKSINIKNISDDKINLLDLNRKEIEIFLLSLGAKKFVTDQLMKWIYNRHCNNFNLMSNLKKDIRKKLNERSYIFASNFIEEKISYDGTVKWITSIDKQKIETIYIPEKKRATLCVSSQIGCSLKCKFCATGQQGFNRNLKVSEIISQIWQANKILKEKKNNSTITNIVFMGMGEPLLNLNNVISAIKIILDKNGFGLSKRRITLSTSGIVPALNKLIKKIDVSLAISLHAPNDFIRNSIMPINMKYNIKSFLNSVSKYLKHSHANRGGVTVEYVMLRGINDLNEHAEELGNILKKIPSKINLIPWNFFKNANFICSSKNRINIFANILRKKGFNTTIRKNRGQDIGAACGQLTGDIVNRIKN.

The active-site Proton acceptor is Glu102. In terms of domain architecture, Radical SAM core spans 108-349 (EKKRATLCVS…KNRGQDIGAA (242 aa)). An intrachain disulfide couples Cys115 to Cys350. Positions 122, 126, and 129 each coordinate [4Fe-4S] cluster. Residues 174 to 175 (GE), Ser206, 228 to 230 (SLH), and Asn307 contribute to the S-adenosyl-L-methionine site. Cys350 serves as the catalytic S-methylcysteine intermediate.

The protein belongs to the radical SAM superfamily. RlmN family. The cofactor is [4Fe-4S] cluster.

It localises to the cytoplasm. The enzyme catalyses adenosine(2503) in 23S rRNA + 2 reduced [2Fe-2S]-[ferredoxin] + 2 S-adenosyl-L-methionine = 2-methyladenosine(2503) in 23S rRNA + 5'-deoxyadenosine + L-methionine + 2 oxidized [2Fe-2S]-[ferredoxin] + S-adenosyl-L-homocysteine. It catalyses the reaction adenosine(37) in tRNA + 2 reduced [2Fe-2S]-[ferredoxin] + 2 S-adenosyl-L-methionine = 2-methyladenosine(37) in tRNA + 5'-deoxyadenosine + L-methionine + 2 oxidized [2Fe-2S]-[ferredoxin] + S-adenosyl-L-homocysteine. Functionally, specifically methylates position 2 of adenine 2503 in 23S rRNA and position 2 of adenine 37 in tRNAs. m2A2503 modification seems to play a crucial role in the proofreading step occurring at the peptidyl transferase center and thus would serve to optimize ribosomal fidelity. The chain is Dual-specificity RNA methyltransferase RlmN from Buchnera aphidicola subsp. Schizaphis graminum (strain Sg).